Reading from the N-terminus, the 436-residue chain is Transcriptional regulator dmxR14 (436 aa).

Polar residues predominate over residues 1–27; sequence MEEAETNTQVDSVPSNSVRSGAELSSK. The tract at residues 1 to 32 is disordered; sequence MEEAETNTQVDSVPSNSVRSGAELSSKSKLRD. Residues 34–61 constitute a DNA-binding region (zn(2)-C6 fungal-type); sequence CHACARSKVRCPKQKPSCSRCEARGTTC. Residues 67 to 136 form a disordered region; the sequence is RRPGRRRETS…ITTVHNGPEN (70 aa). A compositionally biased stretch (polar residues) spans 90-136; it reads SHANNRNSPSFSSTRSTLPSPIASDSNSNFTQPQNSSITTVHNGPEN.

The protein localises to the nucleus. In terms of biological role, transcriptional regulator; part of the gene cluster that mediates the biosynthesis of the dimeric xanthones cryptosporioptides. This Cryptosporiopsis sp. (strain 8999) protein is Transcriptional regulator dmxR14.